The chain runs to 313 residues: Ribosomal RNA small subunit methyltransferase H (313 aa).

S-adenosyl-L-methionine-binding positions include 35–37 (GGH), D55, F80, D102, and Q109.

Belongs to the methyltransferase superfamily. RsmH family.

It localises to the cytoplasm. The catalysed reaction is cytidine(1402) in 16S rRNA + S-adenosyl-L-methionine = N(4)-methylcytidine(1402) in 16S rRNA + S-adenosyl-L-homocysteine + H(+). In terms of biological role, specifically methylates the N4 position of cytidine in position 1402 (C1402) of 16S rRNA. The protein is Ribosomal RNA small subunit methyltransferase H of Shewanella woodyi (strain ATCC 51908 / MS32).